Consider the following 357-residue polypeptide: 3-isopropylmalate dehydrogenase (357 aa).

NAD(+) is bound at residue 75–88 (GPKWEHLPPAEQPE). 4 residues coordinate substrate: arginine 96, arginine 106, arginine 135, and aspartate 224. Mg(2+) contacts are provided by aspartate 224, aspartate 248, and aspartate 252. 282-294 (GSAPDIAGQGIAN) is an NAD(+) binding site.

This sequence belongs to the isocitrate and isopropylmalate dehydrogenases family. LeuB type 1 subfamily. In terms of assembly, homodimer. It depends on Mg(2+) as a cofactor. Mn(2+) is required as a cofactor.

It is found in the cytoplasm. It carries out the reaction (2R,3S)-3-isopropylmalate + NAD(+) = 4-methyl-2-oxopentanoate + CO2 + NADH. The protein operates within amino-acid biosynthesis; L-leucine biosynthesis; L-leucine from 3-methyl-2-oxobutanoate: step 3/4. In terms of biological role, catalyzes the oxidation of 3-carboxy-2-hydroxy-4-methylpentanoate (3-isopropylmalate) to 3-carboxy-4-methyl-2-oxopentanoate. The product decarboxylates to 4-methyl-2 oxopentanoate. This is 3-isopropylmalate dehydrogenase from Desulfotalea psychrophila (strain LSv54 / DSM 12343).